The primary structure comprises 61 residues: Bowman-Birk type proteinase inhibitor B5 (61 aa).

Disulfide bonds link cysteine 5–cysteine 60, cysteine 6–cysteine 22, cysteine 9–cysteine 56, cysteine 12–cysteine 20, cysteine 29–cysteine 36, and cysteine 33–cysteine 48.

Belongs to the Bowman-Birk serine protease inhibitor family. As to expression, expressed in bulb (at protein level).

Serine protease inhibitor. Inhibits trypsin (Ki = 41 nM) and weakly inhibits chymotrypsin (Ki = 410 nM). Does not inhibit bacterial subtilisin. The polypeptide is Bowman-Birk type proteinase inhibitor B5 (Hyacinthus orientalis (Common hyacinth)).